We begin with the raw amino-acid sequence, 58 residues long: Large ribosomal subunit protein uL30 (58 aa).

This sequence belongs to the universal ribosomal protein uL30 family. As to quaternary structure, part of the 50S ribosomal subunit.

This chain is Large ribosomal subunit protein uL30, found in Acinetobacter baylyi (strain ATCC 33305 / BD413 / ADP1).